Here is a 324-residue protein sequence, read N- to C-terminus: Protoheme IX farnesyltransferase (324 aa).

The next 9 helical transmembrane spans lie at 31–51 (LILL…SGQV), 56–76 (FLTT…INCI), 105–125 (VFAA…ANLL), 126–146 (SACL…YWLK), 153–173 (IVIG…AVTG), 181–201 (VLFA…AMMI), 214–234 (PVVN…LLLL), 238–258 (LLLV…AIVL), and 285–305 (FSIL…LPWT).

Belongs to the UbiA prenyltransferase family. Protoheme IX farnesyltransferase subfamily.

Its subcellular location is the cell inner membrane. The catalysed reaction is heme b + (2E,6E)-farnesyl diphosphate + H2O = Fe(II)-heme o + diphosphate. The protein operates within porphyrin-containing compound metabolism; heme O biosynthesis; heme O from protoheme: step 1/1. In terms of biological role, converts heme B (protoheme IX) to heme O by substitution of the vinyl group on carbon 2 of heme B porphyrin ring with a hydroxyethyl farnesyl side group. The polypeptide is Protoheme IX farnesyltransferase (Acaryochloris marina (strain MBIC 11017)).